Reading from the N-terminus, the 287-residue chain is Putative syntaxin-4 (287 aa).

The Cytoplasmic portion of the chain corresponds to 1–262 (MHQISGINAA…NRKWKIVTCI (262 aa)). The stretch at 65 to 97 (KCRKLNDHVDKFIAQARGIRRRLADASEELVQY) forms a coiled coil. A t-SNARE coiled-coil homology domain is found at 184–246 (FDDMKNRATD…EQAQQNVRQA (63 aa)). The chain crosses the membrane as a helical; Anchor for type IV membrane protein span at residues 263 to 283 (ALIVLLLVVVYLLSHFLGAII). The Extracellular portion of the chain corresponds to 284 to 287 (PGWK).

It belongs to the syntaxin family.

It is found in the membrane. In terms of biological role, potentially involved in docking of synaptic vesicles at presynaptic active zones. This Caenorhabditis elegans protein is Putative syntaxin-4 (syx-4).